The primary structure comprises 652 residues: DNA ligase (652 aa).

Residues 29 to 33 (DSEYD), 78 to 79 (SL), and Glu107 each bind NAD(+). Lys109 serves as the catalytic N6-AMP-lysine intermediate. NAD(+) contacts are provided by Arg130, Glu164, Lys278, and Lys302. 4 residues coordinate Zn(2+): Cys395, Cys398, Cys413, and Cys418. In terms of domain architecture, BRCT spans 577–652 (VADAALSGLT…VRDEAWLESL (76 aa)).

This sequence belongs to the NAD-dependent DNA ligase family. LigA subfamily. It depends on Mg(2+) as a cofactor. The cofactor is Mn(2+).

It carries out the reaction NAD(+) + (deoxyribonucleotide)n-3'-hydroxyl + 5'-phospho-(deoxyribonucleotide)m = (deoxyribonucleotide)n+m + AMP + beta-nicotinamide D-nucleotide.. In terms of biological role, DNA ligase that catalyzes the formation of phosphodiester linkages between 5'-phosphoryl and 3'-hydroxyl groups in double-stranded DNA using NAD as a coenzyme and as the energy source for the reaction. It is essential for DNA replication and repair of damaged DNA. The polypeptide is DNA ligase (Streptococcus pneumoniae serotype 4 (strain ATCC BAA-334 / TIGR4)).